We begin with the raw amino-acid sequence, 489 residues long: Protein K15 (489 aa).

Residues 1-26 form the signal peptide; the sequence is MKTLIFFWNLWLWALLVCFWCITLVC. The next 11 membrane-spanning stretches (helical) occupy residues 29–49, 63–83, 89–109, 121–141, 148–168, 175–195, 200–220, 237–257, 264–284, 296–316, and 324–344; these read TNSI…VSAI, WPSS…WNLS, TYAC…LTLI, HGIL…VHMS, WIFF…FATV, LVSS…VSCC, CTAT…TGII, FLLL…LLAI, IKGH…LYVW, MLHL…VMLL, and ILTM…LLVF.

As to quaternary structure, interacts with host LYN; this interaction modulates B-cells signaling. Interacts with host ITSN2.

The protein resides in the host cell membrane. Its subcellular location is the host Golgi apparatus. The protein localises to the host trans-Golgi network. Its function is as follows. Plays a crucial role for reactivation of the virus from latency, early viral gene expression and virus production. Modulates host signaling pathways including activation of MAP kinases c-JUN-N-terminal kinase (JNK), ERK2, and NF-kappa-B resulting in the activation of AP-1 and NFAT-dependent gene expression in B-lymphocytes. When expressed in epithelial cells, induces the expression of several inflammatory and angiogenic genes. Also interferes with B-lymphocytes signaling through interaction with host LYN kinase. The polypeptide is Protein K15 (K15) (Human herpesvirus 8 type P (isolate GK18) (HHV-8)).